We begin with the raw amino-acid sequence, 337 residues long: Glyceraldehyde-3-phosphate dehydrogenase 1 (337 aa).

NAD(+)-binding positions include 12–13 (RI), aspartate 34, and arginine 79. Residues 150-152 (SCT), threonine 181, 210-211 (TG), and arginine 233 contribute to the D-glyceraldehyde 3-phosphate site. The Nucleophile role is filled by cysteine 151. NAD(+) is bound at residue asparagine 315.

This sequence belongs to the glyceraldehyde-3-phosphate dehydrogenase family. As to quaternary structure, homotetramer.

The protein resides in the cytoplasm. It catalyses the reaction D-glyceraldehyde 3-phosphate + phosphate + NAD(+) = (2R)-3-phospho-glyceroyl phosphate + NADH + H(+). Its pathway is carbohydrate degradation; glycolysis; pyruvate from D-glyceraldehyde 3-phosphate: step 1/5. The protein is Glyceraldehyde-3-phosphate dehydrogenase 1 (GPD1) of Mucor circinelloides f. lusitanicus (Mucor racemosus var. lusitanicus).